Here is a 381-residue protein sequence, read N- to C-terminus: Dual specificity protein phosphatase 6 (381 aa).

Residues 30–148 (GNEQLLLMDC…FQAEFALHCE (119 aa)) form the Rhodanese domain. The segment at 176–203 (SSSDIESDLDRDPNSATDSDGSPLSNSQ) is disordered. Residues 189–203 (NSATDSDGSPLSNSQ) are compositionally biased toward polar residues. The 144-residue stretch at 206–349 (FPVEILPFLY…LLDFERTLGL (144 aa)) folds into the Tyrosine-protein phosphatase domain. The Phosphocysteine intermediate role is filled by Cys293.

The protein belongs to the protein-tyrosine phosphatase family. Non-receptor class dual specificity subfamily. In terms of assembly, interacts with MAPK1/ERK2. In terms of processing, ubiquitinated by the SCF(FBXO31) complex, leading to its proteasomal degradation. In terms of tissue distribution, expressed in lung, heart, brain, and kidney, but not significantly in skeletal muscle or testis.

It localises to the cytoplasm. The enzyme catalyses O-phospho-L-tyrosyl-[protein] + H2O = L-tyrosyl-[protein] + phosphate. The catalysed reaction is O-phospho-L-seryl-[protein] + H2O = L-seryl-[protein] + phosphate. It catalyses the reaction O-phospho-L-threonyl-[protein] + H2O = L-threonyl-[protein] + phosphate. Functionally, dual specificity protein phosphatase, which mediates dephosphorylation and inactivation of MAP kinases. Has a specificity for the ERK family. Implicated in muscle and neuronal differentiation. Plays an important role in alleviating chronic postoperative pain. Necessary for the normal dephosphorylation of the long-lasting phosphorylated forms of spinal MAPK1/3 and MAP kinase p38 induced by peripheral surgery, which drives the resolution of acute postoperative allodynia. Also important for dephosphorylation of MAPK1/3 in local wound tissue, which further contributes to resolution of acute pain. The polypeptide is Dual specificity protein phosphatase 6 (Dusp6) (Rattus norvegicus (Rat)).